Here is a 448-residue protein sequence, read N- to C-terminus: Glutamyl-tRNA reductase 2 (448 aa).

Residues 50–53, Ser109, 114–116, and Gln120 contribute to the substrate site; these read TCER and ESD. The active-site Nucleophile is Cys51. 190-195 contributes to the NADP(+) binding site; it reads GTGQVA. A disordered region spans residues 423 to 448; it reads DQAVPAYSPQPIGNTSNAAASATPRR. A compositionally biased stretch (polar residues) spans 433–442; it reads PIGNTSNAAA.

The protein belongs to the glutamyl-tRNA reductase family. In terms of assembly, homodimer.

It catalyses the reaction (S)-4-amino-5-oxopentanoate + tRNA(Glu) + NADP(+) = L-glutamyl-tRNA(Glu) + NADPH + H(+). It functions in the pathway porphyrin-containing compound metabolism; protoporphyrin-IX biosynthesis; 5-aminolevulinate from L-glutamyl-tRNA(Glu): step 1/2. Its function is as follows. Catalyzes the NADPH-dependent reduction of glutamyl-tRNA(Glu) to glutamate 1-semialdehyde (GSA). This chain is Glutamyl-tRNA reductase 2, found in Nocardioides sp. (strain ATCC BAA-499 / JS614).